A 210-amino-acid chain; its full sequence is Probable GTP-binding protein EngB (210 aa).

One can recognise an EngB-type G domain in the interval 25-199 (TGIEVAFAGR…RQKLDTWFSE (175 aa)). GTP is bound by residues 33–40 (GRSNAGKS), 60–64 (GRTQL), 78–81 (DLPG), 145–148 (TKTD), and 178–180 (FSS). Residues Ser-40 and Thr-62 each coordinate Mg(2+).

It belongs to the TRAFAC class TrmE-Era-EngA-EngB-Septin-like GTPase superfamily. EngB GTPase family. Requires Mg(2+) as cofactor.

In terms of biological role, necessary for normal cell division and for the maintenance of normal septation. The sequence is that of Probable GTP-binding protein EngB from Escherichia coli O6:K15:H31 (strain 536 / UPEC).